The following is a 95-amino-acid chain: Small ribosomal subunit protein bS18 (95 aa).

Belongs to the bacterial ribosomal protein bS18 family. Part of the 30S ribosomal subunit. Forms a tight heterodimer with protein bS6.

Its function is as follows. Binds as a heterodimer with protein bS6 to the central domain of the 16S rRNA, where it helps stabilize the platform of the 30S subunit. This Rickettsia typhi (strain ATCC VR-144 / Wilmington) protein is Small ribosomal subunit protein bS18.